The following is a 354-amino-acid chain: Methylthioribose-1-phosphate isomerase (354 aa).

Substrate is bound by residues 58–60, Arg101, and Gln204; that span reads RGA. Catalysis depends on Asp245, which acts as the Proton donor. A substrate-binding site is contributed by 255-256; the sequence is NK.

It belongs to the eIF-2B alpha/beta/delta subunits family. MtnA subfamily.

It carries out the reaction 5-(methylsulfanyl)-alpha-D-ribose 1-phosphate = 5-(methylsulfanyl)-D-ribulose 1-phosphate. It functions in the pathway amino-acid biosynthesis; L-methionine biosynthesis via salvage pathway; L-methionine from S-methyl-5-thio-alpha-D-ribose 1-phosphate: step 1/6. Catalyzes the interconversion of methylthioribose-1-phosphate (MTR-1-P) into methylthioribulose-1-phosphate (MTRu-1-P). This is Methylthioribose-1-phosphate isomerase from Xylella fastidiosa (strain M12).